Consider the following 190-residue polypeptide: Potassium-transporting ATPase KdpC subunit (190 aa).

The helical transmembrane segment at 13–33 (IGFLLLTLVCGVLYPGVVTVF) threads the bilayer.

Belongs to the KdpC family. As to quaternary structure, the system is composed of three essential subunits: KdpA, KdpB and KdpC.

It localises to the cell membrane. Part of the high-affinity ATP-driven potassium transport (or Kdp) system, which catalyzes the hydrolysis of ATP coupled with the electrogenic transport of potassium into the cytoplasm. This subunit acts as a catalytic chaperone that increases the ATP-binding affinity of the ATP-hydrolyzing subunit KdpB by the formation of a transient KdpB/KdpC/ATP ternary complex. The protein is Potassium-transporting ATPase KdpC subunit of Listeria monocytogenes serovar 1/2a (strain ATCC BAA-679 / EGD-e).